A 775-amino-acid chain; its full sequence is Melanoma-associated antigen D1 (775 aa).

Residues 37 to 330 are disordered; that stretch reads SEAPPTSQAT…PARQTPSAWQ (294 aa). The span at 39-50 shows a compositional bias: low complexity; the sequence is APPTSQATAAAS. Polar residues-rich tracts occupy residues 52–63, 84–100, 150–180, 223–237, 250–260, and 297–330; these read PNASPQSSQPPT, KAQNTTTKGPNDYSQAR, GQNTTTKAGPSATYNFTQSPSANEMTNNQPK, AQTSADGSQAQNVES, NNLNVEENSNG, and LAWQNPSGWQNQTARQTPPARQSPPARQTPSAWQ. 19 tandem repeats follow at residues 293-298, 299-304, 305-310, 329-334, 335-340, 341-346, 347-352, 353-358, 359-364, 365-370, 371-376, 377-382, 383-388, 389-394, 395-400, 401-406, 407-412, 413-418, and 419-424. Residues 293-441 form a 22 X 6 AA tandem repeats of W-[PQ]-X-P-X-X region; it reads WQTPLAWQNP…IPPDWQNLRP (149 aa). The interval 374-407 is disordered; that stretch reads TPGWQSPPSWQAPPSWQSPQDWQGPPDWQLPPDW. A compositionally biased stretch (low complexity) spans 375–406; sequence PGWQSPPSWQAPPSWQSPQDWQGPPDWQLPPD. One copy of the 20; approximate repeat lies at 425 to 429; sequence WIPAD. A run of 2 repeats spans residues 430–435 and 436–441. Low complexity predominate over residues 437-452; sequence QNLRPSPNLRSSPNSR. Residues 437–463 are disordered; the sequence is QNLRPSPNLRSSPNSRASQNQGPPQPR. The MAGE domain occupies 468 to 666; it reads LQERANKLVK…RDWTAQFMEA (199 aa).

In terms of assembly, interacts with DLX5, DLX7 and MSX2 and forms homomultimers. Interacts with UNC5A. Interacts with TRIM28 and PJA1. Interacts with NGFR/p75NTR and RORA. In terms of tissue distribution, ubiquitous and in the seminiferous tubules expressed in Sertoli cells but not in germ cells. Expression decreases in all tissues with increased age and is detectable only in brain cortex and lung.

Its subcellular location is the cytoplasm. The protein localises to the cell membrane. It is found in the nucleus. Functionally, involved in the apoptotic response after nerve growth factor (NGF) binding in neuronal cells. Inhibits cell cycle progression, and facilitates NGFR-mediated apoptosis. May act as a regulator of the function of DLX family members. May enhance ubiquitin ligase activity of RING-type zinc finger-containing E3 ubiquitin-protein ligases. Proposed to act through recruitment and/or stabilization of the Ubl-conjugating enzyme (E2) at the E3:substrate complex. Plays a role in the circadian rhythm regulation. May act as RORA co-regulator, modulating the expression of core clock genes such as BMAL1 and NFIL3, induced, or NR1D1, repressed. The polypeptide is Melanoma-associated antigen D1 (Maged1) (Rattus norvegicus (Rat)).